The chain runs to 428 residues: Zinc-type alcohol dehydrogenase B (428 aa).

Residues Cys116, His137, Cys167, Cys170, Cys173, and Cys181 each contribute to the Zn(2+) site. Lys393 carries the N6-benzoyllysine modification.

The protein belongs to the zinc-containing alcohol dehydrogenase family. Class-III subfamily. Homodimer. Zn(2+) serves as cofactor. In terms of processing, benzoylation at lys-393 by gcnE leads to the activation od adhB.

The enzyme catalyses a primary alcohol + NAD(+) = an aldehyde + NADH + H(+). The catalysed reaction is a secondary alcohol + NAD(+) = a ketone + NADH + H(+). Functionally, zinc-type alcohol dehydrogenase involved in development, secondary metabolism, pathogenicity, and stress response. Specifically controls the formation of sclerotia and the biosynthesis of aflatoxin. Contribute to seed colonization of A flavus on host maize seed. The protein is Zinc-type alcohol dehydrogenase B of Aspergillus flavus (strain ATCC 200026 / FGSC A1120 / IAM 13836 / NRRL 3357 / JCM 12722 / SRRC 167).